The chain runs to 1166 residues: ATP-dependent helicase/deoxyribonuclease subunit B (1166 aa).

The 278-residue stretch at 1–278 (MGAEFLVGRS…LNLDITYKEL (278 aa)) folds into the UvrD-like helicase ATP-binding domain. The ATP site is built by serine 10, glycine 11, lysine 14, threonine 15, lysine 16, threonine 236, and arginine 283. The 306-residue stretch at 281–586 (TERHTKTPEL…TFSLIPPALD (306 aa)) folds into the UvrD-like helicase C-terminal domain. [4Fe-4S] cluster is bound by residues cysteine 801, cysteine 1121, cysteine 1124, and cysteine 1130.

The protein belongs to the helicase family. AddB/RexB type 1 subfamily. Heterodimer of AddA and AddB. At low magnesium concentrations there is no nuclease activity, but helicase activity is unaffected. is required as a cofactor. It depends on Mg(2+) as a cofactor. The cofactor is [4Fe-4S] cluster.

Functionally, the heterodimer acts both as a highly processive, ATP-dependent DNA helicase and as an ATP-dependent single-stranded exonuclease, acting in both directions. Recognizes the B.subtilis Chi site (5'-AGCGG-3') which transforms the enzyme from a helicase which degrades both DNA strands to one with only 5' to 3' exonuclease activity. This generates a double-stranded DNA with a protruding 3'-terminated single-stranded tail suitable for the initiation of homologous recombination (Chi fragment). The AddB nuclease domain is not required for Chi fragment generation but for recognition of the Chi site; this subunit has 5' -&gt; 3' nuclease activity but no helicase activity. The helicase activity of isolated AddA acts on 3'-tailed substrate and requires AddB to bind to blunt-ended DNA. RecA thread formation during DNA double-strand break repair requires RecJ or AddAB. The sequence is that of ATP-dependent helicase/deoxyribonuclease subunit B from Bacillus subtilis (strain 168).